A 236-amino-acid chain; its full sequence is Ribose-5-phosphate isomerase A (236 aa).

Substrate contacts are provided by residues 29 to 32 (SGST), 86 to 89 (DGAD), and 99 to 102 (KGGG). Catalysis depends on Glu108, which acts as the Proton acceptor. Lys126 serves as a coordination point for substrate.

It belongs to the ribose 5-phosphate isomerase family. As to quaternary structure, homodimer.

It carries out the reaction aldehydo-D-ribose 5-phosphate = D-ribulose 5-phosphate. It participates in carbohydrate degradation; pentose phosphate pathway; D-ribose 5-phosphate from D-ribulose 5-phosphate (non-oxidative stage): step 1/1. Functionally, catalyzes the reversible conversion of ribose-5-phosphate to ribulose 5-phosphate. This is Ribose-5-phosphate isomerase A from Prochlorococcus marinus (strain NATL1A).